A 154-amino-acid polypeptide reads, in one-letter code: Deoxyuridine 5'-triphosphate nucleotidohydrolase (154 aa).

Substrate is bound by residues 64 to 66 (RSG), N77, 81 to 83 (TID), and K91.

It belongs to the dUTPase family. As to quaternary structure, homotrimer. Mg(2+) serves as cofactor.

The catalysed reaction is dUTP + H2O = dUMP + diphosphate + H(+). The protein operates within pyrimidine metabolism; dUMP biosynthesis; dUMP from dCTP (dUTP route): step 2/2. Functionally, this enzyme is involved in nucleotide metabolism: it produces dUMP, the immediate precursor of thymidine nucleotides and it decreases the intracellular concentration of dUTP so that uracil cannot be incorporated into DNA. In Mycobacterium sp. (strain JLS), this protein is Deoxyuridine 5'-triphosphate nucleotidohydrolase.